A 154-amino-acid polypeptide reads, in one-letter code: H/ACA ribonucleoprotein complex subunit nhp2 (154 aa).

S119 is subject to Phosphoserine.

It belongs to the eukaryotic ribosomal protein eL8 family. Component of the small nucleolar ribonucleoprotein particles containing H/ACA-type snoRNAs (H/ACA snoRNPs).

The protein resides in the nucleus. It localises to the nucleolus. Non-catalytic component of the H/ACA small nucleolar ribonucleoprotein (H/ACA snoRNP), which catalyzes pseudouridylation of rRNA and is required for ribosome biogenesis. This involves the isomerization of uridine such that the ribose is subsequently attached to C5, instead of the normal N1. Pseudouridine ('psi') residues may serve to stabilize the conformation of rRNAs. The H/ACA snoRNP complex also mediates pseudouridylation of other types of RNAs. The H/ACA snoRNP complex mediates pseudouridylation at position 93 in U2 snRNA. Directly binds H/ACA snoRNAs. This Schizosaccharomyces pombe (strain 972 / ATCC 24843) (Fission yeast) protein is H/ACA ribonucleoprotein complex subunit nhp2 (nhp2).